The primary structure comprises 111 residues: Nucleoid-associated protein PFL_1905 (111 aa).

Disordered stretches follow at residues 1 to 20 (MKGGMAGLMKQAQQMQEKMA) and 88 to 111 (SNSQEKMSGMTAGMQLPPGMKLPF).

This sequence belongs to the YbaB/EbfC family. In terms of assembly, homodimer.

The protein localises to the cytoplasm. It is found in the nucleoid. Binds to DNA and alters its conformation. May be involved in regulation of gene expression, nucleoid organization and DNA protection. The sequence is that of Nucleoid-associated protein PFL_1905 from Pseudomonas fluorescens (strain ATCC BAA-477 / NRRL B-23932 / Pf-5).